The sequence spans 208 residues: Outer-membrane lipoprotein carrier protein (208 aa).

Residues 1–22 (MRKTLTALMLSLPLLTPHMAFA) form the signal peptide.

It belongs to the LolA family. Monomer.

It localises to the periplasm. Functionally, participates in the translocation of lipoproteins from the inner membrane to the outer membrane. Only forms a complex with a lipoprotein if the residue after the N-terminal Cys is not an aspartate (The Asp acts as a targeting signal to indicate that the lipoprotein should stay in the inner membrane). The polypeptide is Outer-membrane lipoprotein carrier protein (Shewanella woodyi (strain ATCC 51908 / MS32)).